The primary structure comprises 108 residues: Phosphoribosyl-ATP pyrophosphatase (108 aa).

Positions 88 to 108 (VENELDRREGRSGIEEKASRK) are disordered. The segment covering 91–108 (ELDRREGRSGIEEKASRK) has biased composition (basic and acidic residues).

Belongs to the PRA-PH family.

The protein resides in the cytoplasm. The enzyme catalyses 1-(5-phospho-beta-D-ribosyl)-ATP + H2O = 1-(5-phospho-beta-D-ribosyl)-5'-AMP + diphosphate + H(+). Its pathway is amino-acid biosynthesis; L-histidine biosynthesis; L-histidine from 5-phospho-alpha-D-ribose 1-diphosphate: step 2/9. This Paracoccus denitrificans (strain Pd 1222) protein is Phosphoribosyl-ATP pyrophosphatase.